A 249-amino-acid chain; its full sequence is Cyclin-dependent kinase inhibitor 2 (249 aa).

The interval K118 to A180 is disordered. Polar residues predominate over residues A161–A180.

This sequence belongs to the CDI family. ICK/KRP subfamily.

In Oryza sativa subsp. japonica (Rice), this protein is Cyclin-dependent kinase inhibitor 2 (KRP2).